Reading from the N-terminus, the 145-residue chain is Large ribosomal subunit protein mL43 (145 aa).

It belongs to the mitochondrion-specific ribosomal protein mL43 family. Component of the mitochondrial large ribosomal subunit (mt-LSU). Mature yeast 74S mitochondrial ribosomes consist of a small (37S) and a large (54S) subunit. The 37S small subunit contains a 15S ribosomal RNA (15S mt-rRNA) and at least 32 different proteins. The 54S large subunit contains a 21S rRNA (21S mt-rRNA) and at least 45 different proteins.

Its subcellular location is the mitochondrion. Functionally, component of the mitochondrial ribosome (mitoribosome), a dedicated translation machinery responsible for the synthesis of mitochondrial genome-encoded proteins, including at least some of the essential transmembrane subunits of the mitochondrial respiratory chain. The mitoribosomes are attached to the mitochondrial inner membrane and translation products are cotranslationally integrated into the membrane. Also has an extraribosomal function, being essential for mitochondrial genome integrity. May interact with MHR1 to take part in the mtDNA repair mechanism. The chain is Large ribosomal subunit protein mL43 (mrpl51) from Schizosaccharomyces pombe (strain 972 / ATCC 24843) (Fission yeast).